Consider the following 330-residue polypeptide: 6-phosphogluconolactonase (330 aa).

The protein belongs to the cycloisomerase 2 family.

It catalyses the reaction 6-phospho-D-glucono-1,5-lactone + H2O = 6-phospho-D-gluconate + H(+). It functions in the pathway carbohydrate degradation; pentose phosphate pathway; D-ribulose 5-phosphate from D-glucose 6-phosphate (oxidative stage): step 2/3. Functionally, catalyzes the hydrolysis of 6-phosphogluconolactone to 6-phosphogluconate. The polypeptide is 6-phosphogluconolactonase (Erwinia tasmaniensis (strain DSM 17950 / CFBP 7177 / CIP 109463 / NCPPB 4357 / Et1/99)).